The following is a 242-amino-acid chain: 1-(5-phosphoribosyl)-5-[(5-phosphoribosylamino)methylideneamino] imidazole-4-carboxamide isomerase (242 aa).

The active-site Proton acceptor is Asp-8. The active-site Proton donor is Asp-130.

Belongs to the HisA/HisF family.

It localises to the cytoplasm. It catalyses the reaction 1-(5-phospho-beta-D-ribosyl)-5-[(5-phospho-beta-D-ribosylamino)methylideneamino]imidazole-4-carboxamide = 5-[(5-phospho-1-deoxy-D-ribulos-1-ylimino)methylamino]-1-(5-phospho-beta-D-ribosyl)imidazole-4-carboxamide. Its pathway is amino-acid biosynthesis; L-histidine biosynthesis; L-histidine from 5-phospho-alpha-D-ribose 1-diphosphate: step 4/9. The protein is 1-(5-phosphoribosyl)-5-[(5-phosphoribosylamino)methylideneamino] imidazole-4-carboxamide isomerase of Thioalkalivibrio sulfidiphilus (strain HL-EbGR7).